The primary structure comprises 323 residues: Transcription factor JunD (323 aa).

Disordered stretches follow at residues 138–173 (QNQL…APGL) and 197–221 (PFAA…QIVP). The span at 141 to 167 (LGGGGGPNGGAAAAGGGGGGGGGGGGE) shows a compositional bias: gly residues. Residues 198–212 (FAAPPPRLPPPPPPP) show a composition bias toward pro residues. The segment at 242 to 269 (RIKAERKRLRNRIAASKCRKRKLERISR) is basic motif. The 64-residue stretch at 242–305 (RIKAERKRLR…AQLKQKVLSH (64 aa)) folds into the bZIP domain. Residues 270–298 (LEEKVKSLKSQNTELASTASLLREQVAQL) form a leucine-zipper region.

Belongs to the bZIP family. Jun subfamily. In terms of assembly, binds DNA as a dimer.

Its subcellular location is the nucleus. The chain is Transcription factor JunD (JUND) from Gallus gallus (Chicken).